The primary structure comprises 279 residues: Putative carbamate hydrolase RutD (279 aa).

The AB hydrolase-1 domain occupies 23–126 (PVVVLISGLG…LVSVNGWLRI (104 aa)).

Belongs to the AB hydrolase superfamily. Hydrolase RutD family.

The catalysed reaction is carbamate + 2 H(+) = NH4(+) + CO2. Functionally, involved in pyrimidine catabolism. May facilitate the hydrolysis of carbamate, a reaction that can also occur spontaneously. In Escherichia coli O17:K52:H18 (strain UMN026 / ExPEC), this protein is Putative carbamate hydrolase RutD.